The chain runs to 266 residues: Small ribosomal subunit protein uS2 (266 aa).

It belongs to the universal ribosomal protein uS2 family.

The protein is Small ribosomal subunit protein uS2 of Corynebacterium diphtheriae (strain ATCC 700971 / NCTC 13129 / Biotype gravis).